The primary structure comprises 199 residues: Probable GTP-binding protein EngB (199 aa).

One can recognise an EngB-type G domain in the interval 28–199 (DIPEIALAGR…QAWDAILEQI (172 aa)). GTP contacts are provided by residues 36–43 (GRSNVGKS), 63–67 (GKTQL), 81–84 (DVPG), 148–151 (TKAD), and 180–182 (FSS). Positions 43 and 65 each coordinate Mg(2+).

It belongs to the TRAFAC class TrmE-Era-EngA-EngB-Septin-like GTPase superfamily. EngB GTPase family. Mg(2+) serves as cofactor.

In terms of biological role, necessary for normal cell division and for the maintenance of normal septation. The chain is Probable GTP-binding protein EngB from Streptococcus uberis (strain ATCC BAA-854 / 0140J).